Consider the following 88-residue polypeptide: Small ribosomal subunit protein uS15 (88 aa).

It belongs to the universal ribosomal protein uS15 family. In terms of assembly, part of the 30S ribosomal subunit. Forms a bridge to the 50S subunit in the 70S ribosome, contacting the 23S rRNA.

Functionally, one of the primary rRNA binding proteins, it binds directly to 16S rRNA where it helps nucleate assembly of the platform of the 30S subunit by binding and bridging several RNA helices of the 16S rRNA. Its function is as follows. Forms an intersubunit bridge (bridge B4) with the 23S rRNA of the 50S subunit in the ribosome. This Mesoplasma florum (strain ATCC 33453 / NBRC 100688 / NCTC 11704 / L1) (Acholeplasma florum) protein is Small ribosomal subunit protein uS15.